The chain runs to 451 residues: Chromosomal replication initiator protein DnaA (451 aa).

The segment at 1–82 (MENSLWKQCL…RLELQIGSSA (82 aa)) is domain I, interacts with DnaA modulators. Residues 82–114 (AVVAPPRRRQVSVTTPSPSAAADQTPATRSAAS) are domain II. The tract at residues 85 to 112 (APPRRRQVSVTTPSPSAAADQTPATRSA) is disordered. The domain III, AAA+ region stretch occupies residues 115 to 331 (NLNSNFTFDT…GALRRVVANA (217 aa)). ATP contacts are provided by Gly-159, Gly-161, Lys-162, and Thr-163. Positions 332–451 (QFTGQEITVE…YSNLLRTLST (120 aa)) are domain IV, binds dsDNA.

It belongs to the DnaA family. In terms of assembly, oligomerizes as a right-handed, spiral filament on DNA at oriC.

The protein localises to the cytoplasm. Functionally, plays an essential role in the initiation and regulation of chromosomal replication. ATP-DnaA binds to the origin of replication (oriC) to initiate formation of the DNA replication initiation complex once per cell cycle. Binds the DnaA box (a 9 base pair repeat at the origin) and separates the double-stranded (ds)DNA. Forms a right-handed helical filament on oriC DNA; dsDNA binds to the exterior of the filament while single-stranded (ss)DNA is stabiized in the filament's interior. The ATP-DnaA-oriC complex binds and stabilizes one strand of the AT-rich DNA unwinding element (DUE), permitting loading of DNA polymerase. After initiation quickly degrades to an ADP-DnaA complex that is not apt for DNA replication. Binds acidic phospholipids. In Alkalilimnicola ehrlichii (strain ATCC BAA-1101 / DSM 17681 / MLHE-1), this protein is Chromosomal replication initiator protein DnaA.